The chain runs to 471 residues: MSIQIFNTLKREKEPFKPLKDGEVKMYVCGPTVYNYIHIGNARPIIVFDTVRRYFTYRGYDVKFVSNFTDVDDKLIRAANELKLTVPEVADRFIGAYFDDVDQLNVAKATVNPRVTENMDEIIQLISTLIEKGYAYESAGDVYFRTKKFKDYGKLSGQELSELQHGARVEYNERKQDELDFTLWKAAKPGEIFWESPFGNGRPGWHIECSALAKKYLGDTIDIHAGGQDLVFPHHEDEIAQSEAATGKTFAKYWMHNAFLNIDGEKMSKSLGNFITLHDVLKDNDPNVIRFFMLSVHYRKPITLNDAILEDAKNGLERLMIAYQNIDHRIQTDDGEYVEETHEDEWLEQLTELKQAFEDDMDDDFNTANAITTFHELAKRANIYLSKETVSINVLREFLSMMRLFAEVLGLKLENTQTDSLDDSEVEALIEERLQARNERNFARADEIRDILKEKDIILEDTAQGTRFRRG.

Cys29 lines the Zn(2+) pocket. The 'HIGH' region signature appears at 31-41 (PTVYNYIHIGN). 3 residues coordinate Zn(2+): Cys209, His234, and Glu238. A 'KMSKS' region motif is present at residues 266–270 (KMSKS). ATP is bound at residue Lys269.

The protein belongs to the class-I aminoacyl-tRNA synthetase family. Monomer. Zn(2+) serves as cofactor.

It localises to the cytoplasm. The catalysed reaction is tRNA(Cys) + L-cysteine + ATP = L-cysteinyl-tRNA(Cys) + AMP + diphosphate. The sequence is that of Cysteine--tRNA ligase from Listeria innocua serovar 6a (strain ATCC BAA-680 / CLIP 11262).